The primary structure comprises 198 residues: Elongation factor Ts (198 aa).

An involved in Mg(2+) ion dislocation from EF-Tu region spans residues 81–84 (TDFV).

It belongs to the EF-Ts family.

The protein resides in the cytoplasm. Functionally, associates with the EF-Tu.GDP complex and induces the exchange of GDP to GTP. It remains bound to the aminoacyl-tRNA.EF-Tu.GTP complex up to the GTP hydrolysis stage on the ribosome. The polypeptide is Elongation factor Ts (Leptospira biflexa serovar Patoc (strain Patoc 1 / Ames)).